The chain runs to 346 residues: Protein RecA (346 aa).

68–75 serves as a coordination point for ATP; sequence GPESSGKT.

It belongs to the RecA family.

The protein localises to the cytoplasm. Functionally, can catalyze the hydrolysis of ATP in the presence of single-stranded DNA, the ATP-dependent uptake of single-stranded DNA by duplex DNA, and the ATP-dependent hybridization of homologous single-stranded DNAs. It interacts with LexA causing its activation and leading to its autocatalytic cleavage. In Heliobacterium modesticaldum (strain ATCC 51547 / Ice1), this protein is Protein RecA.